We begin with the raw amino-acid sequence, 1352 residues long: Astrotactin-2 (1352 aa).

A disordered region spans residues 1 to 31 (MAAAGARRSPGRGLGLRGRPRLGFHPGPPPP). The signal sequence occupies residues 1–51 (MAAAGARRSPGRGLGLRGRPRLGFHPGPPPPPPPPLLLLFLLLLPPPPLLA). Residues 52-218 (GATAAAASRE…IVEEQMHILH (167 aa)) lie on the Lumenal side of the membrane. Residue asparagine 180 is glycosylated (N-linked (GlcNAc...) asparagine). A helical transmembrane segment spans residues 219–239 (ISVMGGLIALLLLLLVFTVAL). Residues 240 to 447 (YAQRRWQKRR…KGLLKSPVNK (208 aa)) are Cytoplasmic-facing. Disordered regions lie at residues 308–327 (EEEE…DEFG) and 375–421 (TPVE…ADDE). Polar residues predominate over residues 383-392 (QPASRSSTSA). A helical membrane pass occupies residues 448 to 468 (TALTLIAVSSCILAMVCGNQM). Topologically, residues 469-1352 (SCPLTVKVTL…RNTYGETKGR (884 aa)) are lumenal. EGF-like domains are found at residues 523-563 (VRDL…HLCV), 664-708 (PVRD…SGCY), and 712-764 (KGID…KSCL). Cystine bridges form between cysteine 527-cysteine 539, cysteine 535-cysteine 546, cysteine 548-cysteine 562, cysteine 668-cysteine 681, cysteine 675-cysteine 692, cysteine 694-cysteine 707, cysteine 716-cysteine 728, cysteine 724-cysteine 748, and cysteine 750-cysteine 763. The N-linked (GlcNAc...) asparagine glycan is linked to asparagine 796. 3 disulfide bridges follow: cysteine 838/cysteine 1000, cysteine 929/cysteine 990, and cysteine 996/cysteine 1003. N-linked (GlcNAc...) asparagine glycosylation occurs at asparagine 1033. Intrachain disulfides connect cysteine 1049-cysteine 1060, cysteine 1062-cysteine 1075, cysteine 1149-cysteine 1171, cysteine 1203-cysteine 1290, and cysteine 1311-cysteine 1334. Residues 1079–1201 (PQPVLRLSPT…SELSTVTLRT (123 aa)) enclose the Fibronectin type-III domain.

The protein belongs to the astrotactin family. In terms of assembly, interacts with ASTN1; the interaction is not calcium-dependent. As to expression, detected in cerebellum granule neurons; not detected in astroglia (at protein level). Detected primarily in cerebellum, and at lower levels in brain cortex, olfactory bulb, hindbrain and hippocampus dentate gyrus. Between 6 and 10 days after birth, when granule cell migration occurs in the cerebellum, detected in granule cell precursors in the external germinal layer, the molecular layer, the internal granule layer and in Purkinje neurons. Detected in postmitotic neurons in adult cerebellum.

It localises to the membrane. The protein resides in the perikaryon. The protein localises to the cytoplasm. Its subcellular location is the cell cortex. It is found in the early endosome. It localises to the late endosome. The protein resides in the cytoplasmic vesicle. The protein localises to the clathrin-coated vesicle. Its function is as follows. Mediates recycling of the neuronal cell adhesion molecule ASTN1 to the anterior pole of the cell membrane in migrating neurons. Promotes ASTN1 internalization and intracellular transport of endocytosed ASTN1. Selectively binds inositol-4,5-bisphosphate, inositol-3,4,5-trisphosphate and inositol-1,3,4,5-tetrakisphosphate, suggesting it is recruited to membranes that contain lipids with a phosphoinositide headgroup. This Mus musculus (Mouse) protein is Astrotactin-2 (Astn2).